A 508-amino-acid chain; its full sequence is Erythropoietin receptor (508 aa).

The first 24 residues, 1-24 (MDHLGASLWPQVGSLCLLLAGAAW), serve as a signal peptide directing secretion. Over 25-250 (APPPNLPDPK…SLLTPSDLDP (226 aa)) the chain is Extracellular. Residues Cys-52 and Cys-62 are joined by a disulfide bond. Asn-76 carries an N-linked (GlcNAc...) asparagine glycan. A disulfide bridge links Cys-91 with Cys-107. The Fibronectin type-III domain occupies 147–247 (APVGLVARLA…EPVSLLTPSD (101 aa)). A WSXWS motif motif is present at residues 233-237 (WSAWS). The chain crosses the membrane as a helical span at residues 251-273 (LILTLSLILVVILVLLTVLALLS). Residues 274–508 (HRRALKQKIW…PLPPSYVACS (235 aa)) are Cytoplasmic-facing. Lys-281 is covalently cross-linked (Glycyl lysine isopeptide (Lys-Gly) (interchain with G-Cter in ubiquitin)). The short motif at 282-290 (IWPGIPSPE) is the Box 1 motif element. Phosphotyrosine; by JAK2 is present on residues Tyr-368 and Tyr-426. An ITIM motif motif is present at residues 452–457 (LKYLYL). Lys-453 participates in a covalent cross-link: Glycyl lysine isopeptide (Lys-Gly) (interchain with G-Cter in ubiquitin). Residues Tyr-454, Tyr-456, Tyr-468, Tyr-485, Tyr-489, and Tyr-504 each carry the phosphotyrosine; by JAK2 modification. The tract at residues 454–456 (YLY) is required for high-affinity SOCS3 binding. A disordered region spans residues 467-494 (DYSSGDSQGAQGGLSDGPYSNPYENSLI).

Belongs to the type I cytokine receptor family. Type 1 subfamily. Forms homodimers on EPO stimulation. The tyrosine-phosphorylated form interacts with several SH2 domain-containing proteins including LYN, the adapter protein SH2B2, PTPN6, PTPN11, JAK2, PI3 kinases, STAT5A/B, SOCS3, CRKL. Interacts with INPP5D/SHIP1. SH2B2 binding inhibits the JAK-STAT signaling. Interacts with RHEX; this interaction occurs in a erythropoietin (EPO)-dependent manner. Interacts with ATXN2L. Post-translationally, on EPO stimulation, phosphorylated on C-terminal tyrosine residues by JAK2. The phosphotyrosine motifs are also recruitment sites for several SH2-containing proteins and adapter proteins which mediate cell proliferation. Phosphorylation on Tyr-454 is required for PTPN6 interaction, Tyr-426 for PTPN11. Tyr-426 is also required for SOCS3 binding, but Tyr-454/Tyr-456 motif is the preferred binding site. In terms of processing, ubiquitinated by the ECS(SOCS2) complex following ligand-binding and phosphorylation by JAK2, leading to its degradation by the proteasome. Regulation by the ECS(SOCS2) complex acts as a negative feedback loop of erythropoietin-mediated signaling pathway. Ubiquitination at Lys-281 mediates receptor internalization, whereas ubiquitination at Lys-453 promotes trafficking of activated receptors to the lysosomes for degradation. Ubiquitinated by NOSIP; appears to be either multi-monoubiquitinated or polyubiquitinated. Ubiquitination mediates proliferation and survival of EPO-dependent cells. As to expression, erythroid cells and erythroid progenitor cells. Isoform EPOR-F is the most abundant form in EPO-dependent erythroleukemia cells and in late-stage erythroid progenitors. In terms of tissue distribution, isoform EPOR-S and isoform EPOR-T are the predominant forms in bone marrow. As to expression, isoform EPOR-S and isoform EPOR-T are the predominant forms in bone marrow. Isoform EPOR-T is the most abundant from in early-stage erythroid progenitor cells.

The protein localises to the cell membrane. The protein resides in the secreted. In terms of biological role, receptor for erythropoietin, which mediates erythropoietin-induced erythroblast proliferation and differentiation. Upon EPO stimulation, EPOR dimerizes triggering the JAK2/STAT5 signaling cascade. In some cell types, can also activate STAT1 and STAT3. May also activate the LYN tyrosine kinase. Functionally, acts as a dominant-negative receptor of EPOR-mediated signaling. In Homo sapiens (Human), this protein is Erythropoietin receptor.